Reading from the N-terminus, the 180-residue chain is MLTKELVKEAREKAIRMLEKACIAITDEEKEKIEVTDFGLGVLYTFGLEILVYVNNERYCAKELVMFPRQICPEHRHPPIGSYLGKQETFRCRWGEVYLYVPGTPTPNPRARIPEEKKRYFTVWHEIVLRPGEQYTIPPNTLHWFQAGDEGAIVSEFSSQSIDEKDIFTDPNVKRIPEIV.

Position 62 (K62) interacts with D-fructose. Residues H75 and H77 each coordinate Mn(2+). K86 is a binding site for D-fructose. 2 residues coordinate Mn(2+): E88 and H143. Residues E156, D166, and R175 each contribute to the D-fructose site.

It belongs to the D-lyxose ketol-isomerase family. In terms of assembly, homodimer; disulfide-linked. Stabilized by a disulfide bond between the two monomers of the dimeric enzyme and increased hydrophobicity at the dimer interface. Mn(2+) serves as cofactor.

It carries out the reaction D-lyxose = D-xylulose. Sugar isomerase that catalyzes the reversible isomerization of D-lyxose to D-xylulose. Is highly specific for the substrate D-lyxose, showing less than 2% activity towards mannose and other substrates reported for lyxose isomerases. This is D-lyxose ketol-isomerase from Thermofilum sp. (strain ex4484_79).